The primary structure comprises 235 residues: Large ribosomal subunit protein uL1 (235 aa).

It belongs to the universal ribosomal protein uL1 family. Part of the 50S ribosomal subunit.

Functionally, binds directly to 23S rRNA. The L1 stalk is quite mobile in the ribosome, and is involved in E site tRNA release. Its function is as follows. Protein L1 is also a translational repressor protein, it controls the translation of the L11 operon by binding to its mRNA. The protein is Large ribosomal subunit protein uL1 of Synechococcus sp. (strain CC9311).